A 117-amino-acid polypeptide reads, in one-letter code: MSSSTPFDPYALSEHDEERPQNVQSKSRTAELQAEIDDTVGIMRDNINKVAERGERLTSIEDKADNLAVSAQGFKRGANRVRKAMWYKDLKMKMCLALVIIILLVVIIVPIAVHFSR.

Residues 1–30 (MSSSTPFDPYALSEHDEERPQNVQSKSRTA) are disordered. The Cytoplasmic segment spans residues 1–94 (MSSSTPFDPY…MWYKDLKMKM (94 aa)). Positions 28 to 88 (RTAELQAEID…NRVRKAMWYK (61 aa)) constitute a v-SNARE coiled-coil homology domain. Lys-63 participates in a covalent cross-link: Glycyl lysine isopeptide (Lys-Gly) (interchain with G-Cter in ubiquitin). A lipid anchor (S-palmitoyl cysteine) is attached at Cys-95. Residues 95–111 (CLALVIIILLVVIIVPI) form a helical; Anchor for type IV membrane protein membrane-spanning segment. The Vesicular portion of the chain corresponds to 112-117 (AVHFSR).

It belongs to the synaptobrevin family. Post-translationally, palmitoylated by SWF1.

Its subcellular location is the endomembrane system. Its function is as follows. SNC1 and SNC2 are vesicle-targeting proteins essential for normal secretory traffic between the Golgi and the plasma membrane. They may also be involved in vesicle fusion. The polypeptide is Synaptobrevin homolog 1 (SNC1) (Saccharomyces cerevisiae (strain ATCC 204508 / S288c) (Baker's yeast)).